The chain runs to 179 residues: Shikimate kinase (179 aa).

14–19 (GAGKTT) provides a ligand contact to ATP. Position 18 (threonine 18) interacts with Mg(2+). Aspartate 36, arginine 60, and glycine 82 together coordinate substrate. Residue arginine 120 participates in ATP binding. Arginine 139 provides a ligand contact to substrate.

It belongs to the shikimate kinase family. In terms of assembly, monomer. Mg(2+) serves as cofactor.

It localises to the cytoplasm. The catalysed reaction is shikimate + ATP = 3-phosphoshikimate + ADP + H(+). Its pathway is metabolic intermediate biosynthesis; chorismate biosynthesis; chorismate from D-erythrose 4-phosphate and phosphoenolpyruvate: step 5/7. Catalyzes the specific phosphorylation of the 3-hydroxyl group of shikimic acid using ATP as a cosubstrate. In Methylococcus capsulatus (strain ATCC 33009 / NCIMB 11132 / Bath), this protein is Shikimate kinase.